We begin with the raw amino-acid sequence, 229 residues long: GTP cyclohydrolase 1 (229 aa).

The segment at 1 to 31 (MFRESDNTIAPSNQDLNKPVVDKEQPAERTP) is disordered. A compositionally biased stretch (polar residues) spans 7 to 16 (NTIAPSNQDL). Residues cysteine 117, histidine 120, and cysteine 188 each coordinate Zn(2+).

The protein belongs to the GTP cyclohydrolase I family. Toroid-shaped homodecamer, composed of two pentamers of five dimers.

It catalyses the reaction GTP + H2O = 7,8-dihydroneopterin 3'-triphosphate + formate + H(+). It functions in the pathway cofactor biosynthesis; 7,8-dihydroneopterin triphosphate biosynthesis; 7,8-dihydroneopterin triphosphate from GTP: step 1/1. This Rhodopirellula baltica (strain DSM 10527 / NCIMB 13988 / SH1) protein is GTP cyclohydrolase 1.